We begin with the raw amino-acid sequence, 211 residues long: Phosphoserine phosphatase 1 (211 aa).

His9 acts as the Tele-phosphohistidine intermediate in catalysis. The active site involves His150.

This sequence belongs to the histidine phosphatase superfamily. Metal-independent phosphoserine phosphatase family. As to quaternary structure, homodimer. Can also form a heterodimer with PspB.

The catalysed reaction is O-phospho-L-serine + H2O = L-serine + phosphate. It carries out the reaction O-phospho-D-serine + H2O = D-serine + phosphate. Its pathway is amino-acid biosynthesis; L-serine biosynthesis; L-serine from 3-phospho-D-glycerate: step 3/3. With respect to regulation, activity is not inhibited by EDTA in vitro, nor enhanced by the addition of Mg(2+). Its function is as follows. Catalyzes the dephosphorylation of L-phosphoserine to serine and inorganic phosphate. Is poorly or not active toward D-phosphoserine, DL-phosphothreonine, 3-phosphoglycerate, para-nitrophenylphosphate, and fructose-6-phosphate. Does not display phosphoglycerate mutase activity. This chain is Phosphoserine phosphatase 1 (pspA), found in Hydrogenobacter thermophilus (strain DSM 6534 / IAM 12695 / TK-6).